Reading from the N-terminus, the 213-residue chain is Outer-membrane lipoprotein carrier protein (213 aa).

A signal peptide spans 1-23 (MKKLLKQSLLGFALVSMTGAAFA).

This sequence belongs to the LolA family. In terms of assembly, monomer.

The protein resides in the periplasm. Functionally, participates in the translocation of lipoproteins from the inner membrane to the outer membrane. Only forms a complex with a lipoprotein if the residue after the N-terminal Cys is not an aspartate (The Asp acts as a targeting signal to indicate that the lipoprotein should stay in the inner membrane). The sequence is that of Outer-membrane lipoprotein carrier protein from Actinobacillus pleuropneumoniae serotype 7 (strain AP76).